The sequence spans 239 residues: Succinate dehydrogenase [ubiquinone] iron-sulfur subunit (239 aa).

The 90-residue stretch at 11–100 folds into the 2Fe-2S ferredoxin-type domain; that stretch reads FKVYRWNPDK…EMKIYPLPHM (90 aa). Residues C61, C66, C69, and C81 each contribute to the [2Fe-2S] cluster site. Positions 141-171 constitute a 4Fe-4S ferredoxin-type domain; the sequence is DREKLDGLYECVLCACCSTSCPSYWWNSDKY. Residues C151, C154, and C157 each coordinate [4Fe-4S] cluster. Residue C161 participates in [3Fe-4S] cluster binding. W166 is an a ubiquinone binding site. Residues C208 and C214 each coordinate [3Fe-4S] cluster. C218 lines the [4Fe-4S] cluster pocket.

The protein belongs to the succinate dehydrogenase/fumarate reductase iron-sulfur protein family. In terms of assembly, component of complex II composed of four subunits: a flavoprotein (FP), an iron-sulfur protein (IP), and a cytochrome b composed of a large and a small subunit. The cofactor is [2Fe-2S] cluster. [3Fe-4S] cluster serves as cofactor. Requires [4Fe-4S] cluster as cofactor.

Its subcellular location is the mitochondrion inner membrane. It catalyses the reaction a quinone + succinate = fumarate + a quinol. It functions in the pathway carbohydrate metabolism; tricarboxylic acid cycle; fumarate from succinate (eukaryal route): step 1/1. In terms of biological role, iron-sulfur protein (IP) subunit of succinate dehydrogenase (SDH) that is involved in complex II of the mitochondrial electron transport chain and is responsible for transferring electrons from succinate to ubiquinone (coenzyme Q). The chain is Succinate dehydrogenase [ubiquinone] iron-sulfur subunit (SDH2) from Reclinomonas americana.